Here is a 94-residue protein sequence, read N- to C-terminus: MTITKEKIAFMLNAELGFSKSLCEEVVNAVFTNILDIAKEQKLILKNFGSFEVKHKNSRPGINFHTKSQITIEPKNILRFVPSAKLKALINEND.

This sequence belongs to the bacterial histone-like protein family.

This is Histone-like DNA-binding protein from Rickettsia bellii (strain RML369-C).